A 132-amino-acid polypeptide reads, in one-letter code: Small ribosomal subunit protein uS17c (132 aa).

The span at 1–11 (MLLLSSPFVSV) shows a compositional bias: low complexity. Disordered regions lie at residues 1-23 (MLLLSSPFVSVSPPPPPLSSHGA) and 104-132 (PLPPRDTRRKSQLLPPLQSDDDQEPSSRE). Residues 1 to 31 (MLLLSSPFVSVSPPPPPLSSHGARPALRIEA) constitute a chloroplast transit peptide. Residues 122-132 (SDDDQEPSSRE) show a composition bias toward acidic residues.

Belongs to the universal ribosomal protein uS17 family. In terms of assembly, part of the 30S ribosomal subunit.

It is found in the plastid. The protein localises to the chloroplast. In terms of biological role, one of the primary rRNA binding proteins, it binds specifically to the 5'-end of 16S ribosomal RNA. Its function is as follows. In the hcf60 mutation the Activator tag is inserted 17 base pars upstream of the initiation codon. This mutation is seedling lethal, due to plastid ribosome insufficiency. However under non-light stressed conditions photosynthesis and oxygen evolution can occur. In Zea mays (Maize), this protein is Small ribosomal subunit protein uS17c (RPS17).